A 117-amino-acid chain; its full sequence is Pterin-4-alpha-carbinolamine dehydratase 2 (117 aa).

Residues K101, K105, and K112 each carry the N6-acetyllysine; alternate modification. An N6-succinyllysine; alternate mark is found at K101, K105, and K112.

The protein belongs to the pterin-4-alpha-carbinolamine dehydratase family. In terms of assembly, homotetramer. Interacts with DYRK1B.

It catalyses the reaction (4aS,6R)-4a-hydroxy-L-erythro-5,6,7,8-tetrahydrobiopterin = (6R)-L-erythro-6,7-dihydrobiopterin + H2O. Its function is as follows. Involved in tetrahydrobiopterin biosynthesis. Seems to both prevent the formation of 7-pterins and accelerate the formation of quinonoid-BH2. Regulates the dimerization of homeodomain protein HNF-1-alpha and enhances its transcriptional activity. The sequence is that of Pterin-4-alpha-carbinolamine dehydratase 2 (PCBD2) from Pongo abelii (Sumatran orangutan).